The primary structure comprises 396 residues: Cell adhesion molecule 3 (396 aa).

Residues 1-22 (MGAPSALPLLLLLACSWAPGGA) form the signal peptide. Residues 23-124 (NLSQDDSQPW…VRTAKSLVTV (102 aa)) form the Ig-like V-type domain. Residues 23-328 (NLSQDDSQPW…PVPSSSSTYH (306 aa)) are Extracellular-facing. Disulfide bonds link C48–C108, C150–C207, and C252–C297. Ig-like C2-type domains are found at residues 128–226 (PQKP…QRIE) and 231–313 (PTAM…FTLN). Residue N288 is glycosylated (N-linked (GlcNAc...) asparagine). Residues 329-349 (AIIGGIVAFIVFLLLILLIFL) form a helical membrane-spanning segment. The Cytoplasmic segment spans residues 350–396 (GHYLIRHKGTYLTHEAKGSDDAPDADTAIINAEGGQSGGDDKKEYFI). A disordered region spans residues 365–396 (AKGSDDAPDADTAIINAEGGQSGGDDKKEYFI). S386 is modified (phosphoserine).

Belongs to the nectin family. In terms of assembly, homodimer. Can form trans-heterodimers with NECTIN3. Interacts with EPB41L1, DLG3, PALS2 and CASK.

The protein resides in the cell membrane. It localises to the cell junction. Functionally, involved in cell-cell adhesion. Has both calcium-independent homophilic cell-cell adhesion activity and calcium-independent heterophilic cell-cell adhesion activity with IGSF4, NECTIN1 and NECTIN3. Interaction with EPB41L1 may regulate structure or function of cell-cell junctions. This chain is Cell adhesion molecule 3 (Cadm3), found in Rattus norvegicus (Rat).